Here is a 91-residue protein sequence, read N- to C-terminus: Sec-independent protein translocase protein TatA (91 aa).

The chain crosses the membrane as a helical span at residues 1–21 (MGIFDWKHWIVILIVVVLVFG). The tract at residues 41-91 (KAMNDDDKPAEQPAPQPQQAQPAPQGSPLNQPHTIDAQAHKVDEPIRKDQV) is disordered. Residues 51–64 (EQPAPQPQQAQPAP) show a composition bias toward low complexity. A compositionally biased stretch (basic and acidic residues) spans 78 to 91 (QAHKVDEPIRKDQV).

The protein belongs to the TatA/E family. The Tat system comprises two distinct complexes: a TatABC complex, containing multiple copies of TatA, TatB and TatC subunits, and a separate TatA complex, containing only TatA subunits. Substrates initially bind to the TatABC complex, which probably triggers association of the separate TatA complex to form the active translocon.

The protein localises to the cell inner membrane. Functionally, part of the twin-arginine translocation (Tat) system that transports large folded proteins containing a characteristic twin-arginine motif in their signal peptide across membranes. TatA could form the protein-conducting channel of the Tat system. This chain is Sec-independent protein translocase protein TatA, found in Pseudomonas syringae pv. syringae (strain B728a).